Reading from the N-terminus, the 236-residue chain is Ureidoacrylate amidohydrolase RutB (236 aa).

The active-site Proton acceptor is the D24. K133 is a catalytic residue. C166 (nucleophile) is an active-site residue.

This sequence belongs to the isochorismatase family. RutB subfamily.

The enzyme catalyses (Z)-3-ureidoacrylate + H2O + H(+) = (Z)-3-aminoacrylate + NH4(+) + CO2. It catalyses the reaction (Z)-3-ureidoacrylate + H2O = (Z)-3-aminoacrylate + carbamate + H(+). The catalysed reaction is (Z)-2-methylureidoacrylate + H2O + H(+) = (Z)-2-methylaminoacrylate + NH4(+) + CO2. Its function is as follows. Hydrolyzes ureidoacrylate to form aminoacrylate and carbamate. The carbamate hydrolyzes spontaneously, thereby releasing one of the nitrogen atoms of the pyrimidine ring as ammonia and one of its carbon atoms as CO2. The chain is Ureidoacrylate amidohydrolase RutB from Klebsiella pneumoniae subsp. pneumoniae (strain ATCC 700721 / MGH 78578).